Reading from the N-terminus, the 255-residue chain is ETS-related transcription factor Elf-5 (255 aa).

A PNT domain is found at 33 to 119; it reads YPAFEHQTAC…FILQSIRSQG (87 aa). Residues 163–244 constitute a DNA-binding region (ETS); sequence SHLWEFVRDL…VDRRLVYKFG (82 aa).

It belongs to the ETS family.

The protein resides in the nucleus. In terms of biological role, transcriptionally activator that may play a role in regulating the later stages of keratinocytes terminal differentiation. Binds to DNA sequences containing the consensus nucleotide core sequence GGA[AT]. The chain is ETS-related transcription factor Elf-5 (ELF5) from Bos taurus (Bovine).